Reading from the N-terminus, the 236-residue chain is Small ribosomal subunit protein uS2c (236 aa).

The protein belongs to the universal ribosomal protein uS2 family.

It is found in the plastid. It localises to the chloroplast. This chain is Small ribosomal subunit protein uS2c (rps2), found in Nicotiana tabacum (Common tobacco).